Here is a 307-residue protein sequence, read N- to C-terminus: NADH-ubiquinone oxidoreductase chain 2 (307 aa).

A run of 10 helical transmembrane segments spans residues 1–21 (MTLQ…LSMT), 25–45 (WIII…YYML), 58–78 (YFLI…YIFV), 88–108 (FIFI…FWII), 119–139 (IGIV…HMGC), 144–164 (MLNL…LIGM), 193–213 (LFKY…FLYL), 217–237 (MSIS…LFIG), 250–270 (LWFI…VYYL), and 287–307 (HYKM…LFLT).

This sequence belongs to the complex I subunit 2 family.

The protein resides in the mitochondrion inner membrane. It catalyses the reaction a ubiquinone + NADH + 5 H(+)(in) = a ubiquinol + NAD(+) + 4 H(+)(out). In terms of biological role, core subunit of the mitochondrial membrane respiratory chain NADH dehydrogenase (Complex I) that is believed to belong to the minimal assembly required for catalysis. Complex I functions in the transfer of electrons from NADH to the respiratory chain. The immediate electron acceptor for the enzyme is believed to be ubiquinone. The sequence is that of NADH-ubiquinone oxidoreductase chain 2 (ND2) from Albinaria caerulea (Land snail).